The primary structure comprises 87 residues: Large ribosomal subunit protein bL27 (87 aa).

Residues 1-26 (MAHKKGTGSTRNGRDSNSKRLGVKAY) form a disordered region.

This sequence belongs to the bacterial ribosomal protein bL27 family.

This chain is Large ribosomal subunit protein bL27, found in Prochlorococcus marinus (strain SARG / CCMP1375 / SS120).